The sequence spans 576 residues: Peroxisomal targeting signal receptor (576 aa).

Residue Cys10 forms a Glycyl cysteine thioester (Cys-Gly) (interchain with G-Cter in ubiquitin) linkage. Positions 11-33 are amphipathic helix 1 (AH1); the sequence is AAGSNPLAQFTKHTQHDTSLQQS. A Glycyl lysine isopeptide (Lys-Gly) (interchain with G-Cter in ubiquitin) cross-link involves residue Lys22. The segment at 58–75 is amphipathic helix 2 (AH2); that stretch reads RQQMDQFMQQQNNPAFNF. Short sequence motifs (wxxxF/Y motif) lie at residues 100–104 and 128–132; these read WNQEF and WAQDF. Residues 176–195 form a disordered region; the sequence is AQMQQQNPAQAQTSEQSQTQ. Positions 196–200 match the WxxxF/Y motif 3 motif; sequence WEDQF. The interval 224 to 240 is amphipathic helix 4 (AH4); the sequence is FEQVWDDIQVSYADVEL. Residues 249–253 carry the WxxxF/Y motif 4 motif; it reads WEKDF. TPR repeat units lie at residues 278-311, 312-345, 346-383, 384-421, 422-455, 456-489, and 490-523; these read PDAY…DPKH, VDAW…DPTN, LAAL…IASR, ARSS…ASMD, ADVQ…EPDK, ALNW…NPNF, and VRAR…HEVE.

This sequence belongs to the peroxisomal targeting signal receptor family. In terms of assembly, interacts (via WxxxF/Y and LVxEF motifs) with PEX14; promoting translocation through the PEX13-PEX14 docking complex. Interacts with PEX8. Post-translationally, a disulfide bond is created between Cys-10 and Cys-338 or Cys-444. In terms of processing, monoubiquitinated at Cys-10 by PEX2 during PEX5 passage through the retrotranslocation channel: monoubiquitination acts as a signal for PEX5 extraction and is required for proper export from peroxisomes and recycling. When PEX5 recycling is compromised, polyubiquitinated at Lys-22 by PEX10 during its passage through the retrotranslocation channel, leading to its degradation.

Its subcellular location is the peroxisome membrane. It is found in the cytoplasm. The protein resides in the cytosol. It localises to the peroxisome matrix. Receptor that mediates peroxisomal import of proteins containing a C-terminal PTS1-type tripeptide peroxisomal targeting signal (SKL-type). Binds to cargo proteins containing a PTS1 peroxisomal targeting signal in the cytosol, and translocates them into the peroxisome matrix by passing through the peroxisomal docking complex along with cargo proteins. PEX5 receptor is then retrotranslocated into the cytosol, leading to release of bound cargo in the peroxisome matrix, and reset for a subsequent peroxisome import cycle. Required for PEX7 ubiquitination. In Komagataella phaffii (strain GS115 / ATCC 20864) (Yeast), this protein is Peroxisomal targeting signal receptor.